The primary structure comprises 412 residues: Ornithine cyclodeaminase (412 aa).

Positions 237, 238, 316, 348, 349, 350, 351, 369, 392, and 393 each coordinate NAD(+).

The protein belongs to the AgrE/ArgZ ornithine cyclodeaminase family. It depends on NAD(+) as a cofactor.

The enzyme catalyses L-ornithine = L-proline + NH4(+). Catalyzes the conversion of ornithine to proline, with the release of ammonia. The sequence is that of Ornithine cyclodeaminase from Methanopyrus kandleri (strain AV19 / DSM 6324 / JCM 9639 / NBRC 100938).